The primary structure comprises 319 residues: Probable secreted beta-glucosidase C2G2.17c (319 aa).

Positions 1–19 (MLFNNFLCFAVSAIPLVSA) are cleaved as a signal peptide. N-linked (GlcNAc...) asparagine glycosylation is found at Asn36, Asn39, Asn45, Asn48, and Asn221.

Belongs to the SUN family.

The protein resides in the secreted. Its function is as follows. Cell surface beta-glucosidase involved in cell wall biogenesis. This chain is Probable secreted beta-glucosidase C2G2.17c, found in Schizosaccharomyces pombe (strain 972 / ATCC 24843) (Fission yeast).